Reading from the N-terminus, the 403-residue chain is Tyrosine--tRNA ligase (403 aa).

The short motif at 42 to 51 (PTAPDLHLGH) is the 'HIGH' region element. Positions 226-230 (KMSKS) match the 'KMSKS' region motif. Lys-229 is a binding site for ATP. Residues 339–400 (LRIASLLTAA…GKRNFARVSL (62 aa)) enclose the S4 RNA-binding domain.

This sequence belongs to the class-I aminoacyl-tRNA synthetase family. TyrS type 2 subfamily. As to quaternary structure, homodimer.

It is found in the cytoplasm. It carries out the reaction tRNA(Tyr) + L-tyrosine + ATP = L-tyrosyl-tRNA(Tyr) + AMP + diphosphate + H(+). Its function is as follows. Catalyzes the attachment of tyrosine to tRNA(Tyr) in a two-step reaction: tyrosine is first activated by ATP to form Tyr-AMP and then transferred to the acceptor end of tRNA(Tyr). The protein is Tyrosine--tRNA ligase of Xanthomonas oryzae pv. oryzae (strain MAFF 311018).